The following is a 152-amino-acid chain: Transcriptional regulator MraZ (152 aa).

2 SpoVT-AbrB domains span residues 5-52 (ASAV…PLNQ) and 81-124 (ATEC…SESE).

This sequence belongs to the MraZ family. Forms oligomers.

The protein localises to the cytoplasm. It localises to the nucleoid. This chain is Transcriptional regulator MraZ, found in Histophilus somni (strain 129Pt) (Haemophilus somnus).